The primary structure comprises 468 residues: ATP synthase subunit beta 2 (468 aa).

Residue 155–162 (GGAGVGKT) coordinates ATP.

This sequence belongs to the ATPase alpha/beta chains family. In terms of assembly, F-type ATPases have 2 components, CF(1) - the catalytic core - and CF(0) - the membrane proton channel. CF(1) has five subunits: alpha(3), beta(3), gamma(1), delta(1), epsilon(1). CF(0) has four main subunits: a(1), b(1), b'(1) and c(9-12).

It localises to the cell inner membrane. The catalysed reaction is ATP + H2O + 4 H(+)(in) = ADP + phosphate + 5 H(+)(out). Functionally, produces ATP from ADP in the presence of a proton gradient across the membrane. The catalytic sites are hosted primarily by the beta subunits. This Chlorobium luteolum (strain DSM 273 / BCRC 81028 / 2530) (Pelodictyon luteolum) protein is ATP synthase subunit beta 2.